We begin with the raw amino-acid sequence, 215 residues long: Small ribosomal subunit protein uS7 (215 aa).

This sequence belongs to the universal ribosomal protein uS7 family. In terms of assembly, part of the 30S ribosomal subunit.

In terms of biological role, one of the primary rRNA binding proteins, it binds directly to 16S rRNA where it nucleates assembly of the head domain of the 30S subunit. Is located at the subunit interface close to the decoding center. This chain is Small ribosomal subunit protein uS7, found in Pyrococcus abyssi (strain GE5 / Orsay).